The following is a 159-amino-acid chain: Sumo-conjugating enzyme ubc9 (159 aa).

One can recognise a UBC core domain in the interval 4 to 157 (ISSARLSEER…VKAQSKVYPP (154 aa)). The active-site Glycyl thioester intermediate is Cys-93.

Belongs to the ubiquitin-conjugating enzyme family.

It is found in the nucleus. The protein operates within protein modification; protein sumoylation. Accepts the ubiquitin-like protein sumo from the E1 complex and catalyzes its covalent attachment to other proteins with the help of an E3 ligase. In Dictyostelium discoideum (Social amoeba), this protein is Sumo-conjugating enzyme ubc9 (ubc9).